The following is a 104-amino-acid chain: N(4)-acetylcytidine amidohydrolase (104 aa).

The region spanning 6–94 is the ASCH domain; the sequence is ITFFQRFQND…IAEIYPNQTQ (89 aa). Lys-21 acts as the Proton acceptor in catalysis. Thr-24 acts as the Nucleophile in catalysis. The Proton donor role is filled by Glu-74.

The protein belongs to the N(4)-acetylcytidine amidohydrolase family.

It carries out the reaction N(4)-acetylcytidine + H2O = cytidine + acetate + H(+). The catalysed reaction is N(4)-acetyl-2'-deoxycytidine + H2O = 2'-deoxycytidine + acetate + H(+). The enzyme catalyses N(4)-acetylcytosine + H2O = cytosine + acetate + H(+). Catalyzes the hydrolysis of N(4)-acetylcytidine (ac4C). This is N(4)-acetylcytidine amidohydrolase (yqfB) from Salmonella agona (strain SL483).